A 414-amino-acid chain; its full sequence is COUP transcription factor 2 (414 aa).

The interval 1–72 (MAMVVSTWRD…PGGPGSDKQQ (72 aa)) is disordered. The span at 27–37 (PPVPGPPPGAP) shows a compositional bias: pro residues. The segment covering 38–57 (HTPQTPGQGGPASTPAQTAA) has biased composition (low complexity). Threonine 51 is subject to Phosphothreonine. Over residues 58–67 (GGQGGPGGPG) the composition is skewed to gly residues. Positions 76 to 151 (HIECVVCGDK…VGMRREAVQR (76 aa)) form a DNA-binding region, nuclear receptor. 2 consecutive NR C4-type zinc fingers follow at residues 79 to 99 (CVVC…CEGC) and 115 to 139 (CRAN…LKKC). Positions 117-414 (ANRNCPIDQH…SFNWPYMAIQ (298 aa)) are interaction with ZFPM2. Residues 177 to 403 (YLSGYISLLL…TLIRDMLLSG (227 aa)) enclose the NR LBD domain. An important for dimerization region spans residues 337 to 414 (LQEKSQCALE…SFNWPYMAIQ (78 aa)).

Belongs to the nuclear hormone receptor family. NR2 subfamily. In terms of assembly, interacts with SQSTM1. Binds DNA as a dimer; homodimer or heterodimer with NR2F6. Interacts with NCOA1, NCOA2, NCOA3 and PPARGC1A. Interacts with ZFPM2. As to expression, ubiquitous. Expressed in the stromal cells of developing fetal ovaries.

It is found in the nucleus. Functionally, ligand-activated transcription factor. Activated by high concentrations of 9-cis-retinoic acid and all-trans-retinoic acid, but not by dexamethasone, cortisol or progesterone (in vitro). Regulation of the apolipoprotein A-I gene transcription. Binds to DNA site A. May be required to establish ovary identity during early gonad development. The polypeptide is COUP transcription factor 2 (NR2F2) (Homo sapiens (Human)).